The primary structure comprises 73 residues: Large ribosomal subunit protein uL29 (73 aa).

Belongs to the universal ribosomal protein uL29 family.

This Aquifex aeolicus (strain VF5) protein is Large ribosomal subunit protein uL29 (rpmC).